The primary structure comprises 172 residues: Adenine phosphoribosyltransferase (172 aa).

The protein belongs to the purine/pyrimidine phosphoribosyltransferase family. In terms of assembly, homodimer.

It is found in the cytoplasm. The enzyme catalyses AMP + diphosphate = 5-phospho-alpha-D-ribose 1-diphosphate + adenine. The protein operates within purine metabolism; AMP biosynthesis via salvage pathway; AMP from adenine: step 1/1. Catalyzes a salvage reaction resulting in the formation of AMP, that is energically less costly than de novo synthesis. In Prochlorococcus marinus (strain NATL1A), this protein is Adenine phosphoribosyltransferase.